We begin with the raw amino-acid sequence, 465 residues long: Phospholipase A1-II 5 (465 aa).

The active-site Acyl-ester intermediate is Ser-233. Active-site charge relay system residues include Ser-233, Asp-297, and His-336.

Belongs to the AB hydrolase superfamily. Lipase family.

It localises to the cytoplasm. In terms of biological role, acylhydrolase that catalyzes the hydrolysis of phospholipids at the sn-1 position. The protein is Phospholipase A1-II 5 of Oryza sativa subsp. indica (Rice).